We begin with the raw amino-acid sequence, 237 residues long: Proteasome subunit beta type-1 (237 aa).

This sequence belongs to the peptidase T1B family. As to quaternary structure, the 26S proteasome consists of a 20S proteasome core and two 19S regulatory subunits. The 20S proteasome core is a barrel-shaped complex made of 28 subunits that are arranged in four stacked rings. The two outer rings are each formed by seven alpha subunits, and the two inner rings are formed by seven beta subunits. The proteolytic activity is exerted by three beta-subunits psmb5, psmb6 and psmb7.

It localises to the cytoplasm. It is found in the nucleus. Functionally, non-catalytic component of the 20S core proteasome complex involved in the proteolytic degradation of most intracellular proteins. This complex plays numerous essential roles within the cell by associating with different regulatory particles. Associated with two 19S regulatory particles, forms the 26S proteasome and thus participates in the ATP-dependent degradation of ubiquitinated proteins. The 26S proteasome plays a key role in the maintenance of protein homeostasis by removing misfolded or damaged proteins that could impair cellular functions, and by removing proteins whose functions are no longer required. Associated with the PA200 or PA28, the 20S proteasome mediates ubiquitin-independent protein degradation. In Danio rerio (Zebrafish), this protein is Proteasome subunit beta type-1.